We begin with the raw amino-acid sequence, 89 residues long: UPF0223 protein BAMEG_4214 (89 aa).

It belongs to the UPF0223 family.

The sequence is that of UPF0223 protein BAMEG_4214 from Bacillus anthracis (strain CDC 684 / NRRL 3495).